The sequence spans 870 residues: MKQGKSFIFYCLVLLLCGFQQLSSAVTASIAKAIKTTDRKQRVSETLPTGLSYRRFYQHIAHLLGWVPAPDLVCRGYFKEPLILTEHPHPGPATKEPAIVTAKGPSMVTAQGVSILRKDVVVTQPGRIVEADKAYIYRDSKTGHVTKIILIGHVRLHEADKRIVADKGTLTLYPKTAILMNAAYHIYNGEPYFYKFKYPFDAWGIAKHAVRDASNVITLRHATYSTCKPTAPAWSMSATTLVLNRNTHRGEAYNMLLHIGRVPIFYFPYFNFPIDNYRKTGFLIPYAGHSSSSGWFFALPFYWNMAPNYDLTLTPEFMSERGLNLQSLFRFLSTKSSGTIYLNYLPNDKVFQQFRETTLSKFPPSVLAEHPVFIPYVDKLKKMKNQRAFFSMNETTLFNSEWSSRVILNYVTDPYFFQDLGGQLGGSSLANQLLNQIDLQYNGLHWQFMGMLQAYQTLHLISQWTTPALDQYSRLPDFNIVGYYPDIARHVDFNFNAEAVNFDYRSDFVPDKPRGQRFHMRPGISFPFYFASGYIIPQLWADATAYNITHFQPGQAHTSSRLLPIFDIDSGLYFDRNFHLGHRSFIQTLEPRFFYLYVPYQNQDRFPNFDTVLLPFSFEQLFALNQFTGNDRLQNANQASFALTSRVLDAQNGSPILTANVGFIYYLENQRVCLTPGCTPSNYHYSPIIGELTFYPFPYWSFTGSLAWDPNLGQTNNTSVELAYNNGGKKADIRYLFVHGNEDSIVTPTTLIVPGNAYSQNTNHVISSGAWPLLKKWNAVGYWDYNITERRTDVYSIGVQYNTCCWALSFSIRRTYAGLKVDPNGALQRQYDTAYGFELQLKGLGNLGTAPISTVTVLDAMNNGVSNDVR.

Positions 1–25 (MKQGKSFIFYCLVLLLCGFQQLSSA) are cleaved as a signal peptide.

Belongs to the LptD family. In terms of assembly, component of the lipopolysaccharide transport and assembly complex. Interacts with LptE and LptA.

The protein localises to the cell outer membrane. Functionally, together with LptE, is involved in the assembly of lipopolysaccharide (LPS) at the surface of the outer membrane. The chain is LPS-assembly protein LptD from Coxiella burnetii (strain RSA 493 / Nine Mile phase I).